Consider the following 467-residue polypeptide: Serine/threonine-protein phosphatase 2A 56 kDa regulatory subunit epsilon isoform (467 aa).

The tract at residues 1–39 (MSSAPTTPPSVDKVDGFSRKSVRKARQKRSQSSSQFRSQ) is disordered. The residue at position 2 (Ser2) is an N-acetylserine. Thr7 is subject to Phosphothreonine. Basic residues predominate over residues 20–29 (KSVRKARQKR). Ser30, Ser32, and Ser34 each carry phosphoserine. Residues 30–39 (SQSSSQFRSQ) are compositionally biased toward low complexity.

The protein belongs to the phosphatase 2A regulatory subunit B56 family. PP2A consists of a common heterodimeric core enzyme, composed of a 36 kDa catalytic subunit (subunit C) and a 65 kDa constant regulatory subunit (PR65 or subunit A), that associates with a variety of regulatory subunits. Proteins that associate with the core dimer include three families of regulatory subunits B (the R2/B/PR55/B55, R3/B''/PR72/PR130/PR59 and R5/B'/B56 families), the 48 kDa variable regulatory subunit, viral proteins, and cell signaling molecules. Interacts with SGO1. Found in a complex with at least ARL2, PPP2CB; PPP2R1A, PPP2R2A, PPP2R5E and TBCD.

Its subcellular location is the cytoplasm. Its function is as follows. The B regulatory subunit might modulate substrate selectivity and catalytic activity, and might also direct the localization of the catalytic enzyme to a particular subcellular compartment. Interacts with cyclin G in vitro. This chain is Serine/threonine-protein phosphatase 2A 56 kDa regulatory subunit epsilon isoform (Ppp2r5e), found in Mus musculus (Mouse).